We begin with the raw amino-acid sequence, 630 residues long: Arginine--tRNA ligase (630 aa).

The 'HIGH' region motif lies at 120 to 130 (ANPIHPLHIGH).

The protein belongs to the class-I aminoacyl-tRNA synthetase family.

Its subcellular location is the cytoplasm. The enzyme catalyses tRNA(Arg) + L-arginine + ATP = L-arginyl-tRNA(Arg) + AMP + diphosphate. The sequence is that of Arginine--tRNA ligase from Pyrobaculum arsenaticum (strain DSM 13514 / JCM 11321 / PZ6).